A 352-amino-acid chain; its full sequence is Putative [LysW]-L-2-aminoadipate 6-phosphate reductase (352 aa).

11–14 (SGYT) is an NADP(+) binding site. Residue Cys-148 is part of the active site. Asn-319 is an NADP(+) binding site.

It belongs to the NAGSA dehydrogenase family. Type 1 subfamily. LysY sub-subfamily.

It is found in the cytoplasm. The catalysed reaction is [amino-group carrier protein]-C-terminal-N-(1-carboxy-5-oxopentan-1-yl)-L-glutamine + phosphate + NADP(+) = [amino-group carrier protein]-C-terminal-N-(1-carboxy-5-phosphooxy-5-oxopentan-1-yl)-L-glutamine + NADPH + H(+). The protein operates within amino-acid biosynthesis; L-lysine biosynthesis via AAA pathway; L-lysine from L-alpha-aminoadipate (Thermus route): step 3/5. Its function is as follows. Catalyzes the NADPH-dependent reduction of [LysW]-aminoadipate 6-phosphate to yield [LysW]-aminoadipate 6-semialdehyde. In Thermomicrobium roseum (strain ATCC 27502 / DSM 5159 / P-2), this protein is Putative [LysW]-L-2-aminoadipate 6-phosphate reductase.